We begin with the raw amino-acid sequence, 134 residues long: DNA-directed RNA polymerase subunit omega (134 aa).

This sequence belongs to the RNA polymerase subunit omega family. As to quaternary structure, the RNAP catalytic core consists of 2 alpha, 1 beta, 1 beta' and 1 omega subunit. When a sigma factor is associated with the core the holoenzyme is formed, which can initiate transcription.

The enzyme catalyses RNA(n) + a ribonucleoside 5'-triphosphate = RNA(n+1) + diphosphate. Promotes RNA polymerase assembly. Latches the N- and C-terminal regions of the beta' subunit thereby facilitating its interaction with the beta and alpha subunits. In Rhizobium johnstonii (strain DSM 114642 / LMG 32736 / 3841) (Rhizobium leguminosarum bv. viciae), this protein is DNA-directed RNA polymerase subunit omega.